We begin with the raw amino-acid sequence, 358 residues long: Probable branched-chain-amino-acid aminotransferase (358 aa).

Position 196 is an N6-(pyridoxal phosphate)lysine (Lys-196).

Belongs to the class-IV pyridoxal-phosphate-dependent aminotransferase family. It depends on pyridoxal 5'-phosphate as a cofactor.

The catalysed reaction is L-leucine + 2-oxoglutarate = 4-methyl-2-oxopentanoate + L-glutamate. It carries out the reaction L-isoleucine + 2-oxoglutarate = (S)-3-methyl-2-oxopentanoate + L-glutamate. The enzyme catalyses L-valine + 2-oxoglutarate = 3-methyl-2-oxobutanoate + L-glutamate. It functions in the pathway amino-acid biosynthesis; L-isoleucine biosynthesis; L-isoleucine from 2-oxobutanoate: step 4/4. The protein operates within amino-acid biosynthesis; L-leucine biosynthesis; L-leucine from 3-methyl-2-oxobutanoate: step 4/4. Its pathway is amino-acid biosynthesis; L-valine biosynthesis; L-valine from pyruvate: step 4/4. Functionally, acts on leucine, isoleucine and valine. The sequence is that of Probable branched-chain-amino-acid aminotransferase (ilvE) from Staphylococcus aureus (strain MRSA252).